Reading from the N-terminus, the 606-residue chain is Aspartate--tRNA(Asp/Asn) ligase (606 aa).

An L-aspartate-binding site is contributed by Glu-187. The aspartate stretch occupies residues 211-214; sequence QQFK. The L-aspartate site is built by Arg-233 and His-461. 233 to 235 contributes to the ATP binding site; the sequence is RDE. Glu-495 serves as a coordination point for ATP. Position 502 (Arg-502) interacts with L-aspartate. 547–550 is a binding site for ATP; the sequence is GLDR.

It belongs to the class-II aminoacyl-tRNA synthetase family. Type 1 subfamily. Homodimer.

Its subcellular location is the cytoplasm. It carries out the reaction tRNA(Asx) + L-aspartate + ATP = L-aspartyl-tRNA(Asx) + AMP + diphosphate. Aspartyl-tRNA synthetase with relaxed tRNA specificity since it is able to aspartylate not only its cognate tRNA(Asp) but also tRNA(Asn). Reaction proceeds in two steps: L-aspartate is first activated by ATP to form Asp-AMP and then transferred to the acceptor end of tRNA(Asp/Asn). The protein is Aspartate--tRNA(Asp/Asn) ligase of Chlorobium phaeobacteroides (strain DSM 266 / SMG 266 / 2430).